Consider the following 600-residue polypeptide: UvrABC system protein C (600 aa).

In terms of domain architecture, GIY-YIG spans 15–92 (EKPGCYLMKD…IKKYQPYYNV (78 aa)). The UVR domain occupies 197-232 (TSVKQDLTTKMEKASENLEFERAAEIRDQLKYIEET).

It belongs to the UvrC family. In terms of assembly, interacts with UvrB in an incision complex.

The protein resides in the cytoplasm. In terms of biological role, the UvrABC repair system catalyzes the recognition and processing of DNA lesions. UvrC both incises the 5' and 3' sides of the lesion. The N-terminal half is responsible for the 3' incision and the C-terminal half is responsible for the 5' incision. This is UvrABC system protein C from Lactobacillus acidophilus (strain ATCC 700396 / NCK56 / N2 / NCFM).